We begin with the raw amino-acid sequence, 73 residues long: UPF0346 protein LVIS_0790 (73 aa).

This sequence belongs to the UPF0346 family.

This chain is UPF0346 protein LVIS_0790, found in Levilactobacillus brevis (strain ATCC 367 / BCRC 12310 / CIP 105137 / JCM 1170 / LMG 11437 / NCIMB 947 / NCTC 947) (Lactobacillus brevis).